Consider the following 128-residue polypeptide: Protein FAM229A (128 aa).

The segment at 1-96 is disordered; sequence MQSSPSTLGP…VATDQNPVRP (96 aa).

This sequence belongs to the FAM229 family.

This is Protein FAM229A (Fam229a) from Mus musculus (Mouse).